The following is a 446-amino-acid chain: 5-hydroxytryptamine receptor (446 aa).

At 1 to 65 the chain is on the extracellular side; sequence MEGAEGQEEL…AALVRAAAKA (65 aa). Residues Asn-23, Asn-27, Asn-36, and Asn-42 are each glycosylated (N-linked (GlcNAc...) asparagine). Residues 66 to 88 form a helical membrane-spanning segment; sequence VVLGLLILATVVGNVFVIAAILL. Over 89–98 the chain is Cytoplasmic; sequence ERHLRSAANN. Residues 99 to 120 form a helical membrane-spanning segment; it reads LILSLAVADLLVACLVMPLGAV. The Extracellular segment spans residues 121–135; it reads YEVVQRWTLGPELCD. Residues Cys-134 and Cys-214 are joined by a disulfide bond. A helical transmembrane segment spans residues 136 to 157; sequence MWTSGDVLCCTASILHLVAIAL. Residues 158–176 are Cytoplasmic-facing; the sequence is DRYWAVTNIDYIHASTAKR. A helical transmembrane segment spans residues 177–199; sequence VGMMIACVWTVSFFVCIAQLLGW. At 200-227 the chain is on the extracellular side; sequence KDPDWNQRVSEDLRCVVSQDVGYQIFAT. Residues 228–249 form a helical membrane-spanning segment; the sequence is ASSFYVPVLIILILYWRIYQTA. Residues 250 to 367 lie on the Cytoplasmic side of the membrane; that stretch reads RKRIRRRRGA…SKRERKAAKT (118 aa). Positions 304 to 324 are enriched in polar residues; the sequence is TTTGFTNVSSNNTSPEKQSCA. The disordered stretch occupies residues 304-329; the sequence is TTTGFTNVSSNNTSPEKQSCANGLEA. The helical transmembrane segment at 368–391 threads the bilayer; sequence LAIITGAFVACWLPFFVLAILVPT. Residues 392-399 are Extracellular-facing; it reads CDCEVSPV. A helical membrane pass occupies residues 400–422; it reads LTSLSLWLGYFNSTLNPVIYTVF. Residues 423–446 are Cytoplasmic-facing; the sequence is SPEFRHAFQRLLCGRRVRRRRAPQ.

It belongs to the G-protein coupled receptor 1 family.

The protein localises to the cell membrane. In terms of biological role, this is a receptor for 5-hydroxytryptamine (serotonin), a biogenic hormone that function as a neurotransmitter, a hormone, and a mitogen. The chain is 5-hydroxytryptamine receptor from Bombyx mori (Silk moth).